Here is a 476-residue protein sequence, read N- to C-terminus: G-patch domain and KOW motifs-containing protein (476 aa).

The disordered stretch occupies residues 1-96 (MADSKEGVLP…PGPSTDTGAL (96 aa)). Position 2 is an N-acetylalanine (Ala-2). Residue Lys-5 forms a Glycyl lysine isopeptide (Lys-Gly) (interchain with G-Cter in SUMO2) linkage. Polar residues predominate over residues 13-26 (AASTAPISFGFTRT). Residue Ser-27 is modified to Phosphoserine; by PKA. 2 positions are modified to phosphoserine: Ser-35 and Ser-42. The span at 43 to 58 (PEEKDFLKTVEGRELQ) shows a compositional bias: basic and acidic residues. Ser-115 is subject to Phosphoserine. One can recognise a G-patch domain in the interval 164-210 (VEAYGLAMLRGMGWKPGEGIGRTFNQVVKPRVNSLRPKGLGLGANLT). The disordered stretch occupies residues 203–244 (LGLGANLTEAQALTPTGPSRMPRPDEEQEKDKEDQPQGLVPG). Over residues 210 to 219 (TEAQALTPTG) the composition is skewed to polar residues. A Phosphothreonine modification is found at Thr-216. The span at 224–237 (PRPDEEQEKDKEDQ) shows a compositional bias: basic and acidic residues. The KOW 1 domain maps to 240–267 (GLVPGGAVVVLSGPHRGLYGKVEGLDPD). Thr-316 is modified (phosphothreonine; by PKA). Residues 327–353 (DNSERKRKHLPDRQDGPAAKSEKAAPR) are disordered. Basic and acidic residues predominate over residues 337–351 (PDRQDGPAAKSEKAA). In terms of domain architecture, KOW 2 spans 415-442 (PKAEGDRVMVVLGPQTGRVGHLLSRDRA). A Phosphoserine modification is found at Ser-471. Thr-473 bears the Phosphothreonine mark.

The protein belongs to the MOS2 family. Component of the minor spliceosome, which splices U12-type introns. Interacts with PRKX. Interacts with DHX16. Interacts with PRKACB. Phosphorylation regulates its ability to bind RNA.

Its subcellular location is the nucleus. Functionally, RNA-binding protein involved in pre-mRNA splicing. As a component of the minor spliceosome, involved in the splicing of U12-type introns in pre-mRNAs. This chain is G-patch domain and KOW motifs-containing protein (GPKOW), found in Homo sapiens (Human).